A 446-amino-acid polypeptide reads, in one-letter code: Na(+)-translocating NADH-quinone reductase subunit A (446 aa).

Belongs to the NqrA family. In terms of assembly, composed of six subunits; NqrA, NqrB, NqrC, NqrD, NqrE and NqrF.

The catalysed reaction is a ubiquinone + n Na(+)(in) + NADH + H(+) = a ubiquinol + n Na(+)(out) + NAD(+). NQR complex catalyzes the reduction of ubiquinone-1 to ubiquinol by two successive reactions, coupled with the transport of Na(+) ions from the cytoplasm to the periplasm. NqrA to NqrE are probably involved in the second step, the conversion of ubisemiquinone to ubiquinol. This is Na(+)-translocating NADH-quinone reductase subunit A from Pasteurella multocida (strain Pm70).